Here is a 303-residue protein sequence, read N- to C-terminus: Crk-like protein (303 aa).

An SH2 domain is found at 14–102 (WYMGPVSRQE…LDTTTLIEPA (89 aa)). Residues 123 to 183 (DNLEYVRTLY…PVPYVEKLVR (61 aa)) enclose the SH3 1 domain. 2 positions are modified to phosphotyrosine: Tyr-127 and Tyr-207. A disordered region spans residues 184–234 (SSPHGKHGNRNSNSYGIPEPAHAYAQPQTTTPLPAVSGSPGAAITPLPSTQ). Residues 235–296 (NGPVFAKAIQ…PFTHVKIFDP (62 aa)) form the SH3 2 domain.

This sequence belongs to the CRK family. Interacts with tyrosine-phosphorylated EPOR and INPP5D/SHIP1. Interacts with DOCK2 and DOCK5 via its first SH3 domain. Interacts with phosphorylated CBLB and IRS4. Interacts with BCAR1/CAS and NEDD9/HEF1.

May mediate the transduction of intracellular signals. This chain is Crk-like protein (CRKL), found in Homo sapiens (Human).